A 1140-amino-acid chain; its full sequence is Eukaryotic translation initiation factor 3 subunit A (1140 aa).

The PCI domain maps to 319–502; that stretch reads LQRMAAHVLL…NSIYFGTDLT (184 aa). Composition is skewed to basic and acidic residues over residues 589 to 624, 830 to 900, and 921 to 984; these read QNNAREEEEARRQEEESRKAKLAEQKRLEQEQEERE, AAEE…RGGD, and ERND…EPDS. 2 disordered regions span residues 589 to 632 and 830 to 1140; these read QNNA…QNEI and AAEE…VKRR. The span at 987 to 998 shows a compositional bias: low complexity; the sequence is AAGAKDAGGAPA. 3 stretches are compositionally biased toward basic and acidic residues: residues 999–1050, 1058–1086, and 1109–1130; these read SRDD…EPQR, DAPRQSDRDNRRPGGERRDRDGRDVRGDQ, and PRDEKPAAKRDQPQDKENKGGD.

It belongs to the eIF-3 subunit A family. Component of the eukaryotic translation initiation factor 3 (eIF-3) complex. The eIF-3 complex interacts with pix.

The protein localises to the cytoplasm. Functionally, RNA-binding component of the eukaryotic translation initiation factor 3 (eIF-3) complex, which is involved in protein synthesis of a specialized repertoire of mRNAs and, together with other initiation factors, stimulates binding of mRNA and methionyl-tRNAi to the 40S ribosome. The eIF-3 complex specifically targets and initiates translation of a subset of mRNAs involved in cell proliferation. This is Eukaryotic translation initiation factor 3 subunit A from Drosophila ananassae (Fruit fly).